The primary structure comprises 299 residues: Phosphatidylserine decarboxylase proenzyme (299 aa).

Residues Asp115, His171, and Ser258 each act as charge relay system; for autoendoproteolytic cleavage activity in the active site. Ser258 acts as the Schiff-base intermediate with substrate; via pyruvic acid; for decarboxylase activity in catalysis. Ser258 is modified (pyruvic acid (Ser); by autocatalysis).

This sequence belongs to the phosphatidylserine decarboxylase family. PSD-B subfamily. Prokaryotic type II sub-subfamily. As to quaternary structure, heterodimer of a large membrane-associated beta subunit and a small pyruvoyl-containing alpha subunit. Pyruvate serves as cofactor. Post-translationally, is synthesized initially as an inactive proenzyme. Formation of the active enzyme involves a self-maturation process in which the active site pyruvoyl group is generated from an internal serine residue via an autocatalytic post-translational modification. Two non-identical subunits are generated from the proenzyme in this reaction, and the pyruvate is formed at the N-terminus of the alpha chain, which is derived from the carboxyl end of the proenzyme. The autoendoproteolytic cleavage occurs by a canonical serine protease mechanism, in which the side chain hydroxyl group of the serine supplies its oxygen atom to form the C-terminus of the beta chain, while the remainder of the serine residue undergoes an oxidative deamination to produce ammonia and the pyruvoyl prosthetic group on the alpha chain. During this reaction, the Ser that is part of the protease active site of the proenzyme becomes the pyruvoyl prosthetic group, which constitutes an essential element of the active site of the mature decarboxylase.

The protein localises to the cell membrane. It carries out the reaction a 1,2-diacyl-sn-glycero-3-phospho-L-serine + H(+) = a 1,2-diacyl-sn-glycero-3-phosphoethanolamine + CO2. It participates in phospholipid metabolism; phosphatidylethanolamine biosynthesis; phosphatidylethanolamine from CDP-diacylglycerol: step 2/2. Functionally, catalyzes the formation of phosphatidylethanolamine (PtdEtn) from phosphatidylserine (PtdSer). The polypeptide is Phosphatidylserine decarboxylase proenzyme (Chlamydia felis (strain Fe/C-56) (Chlamydophila felis)).